A 231-amino-acid chain; its full sequence is Large ribosomal subunit protein uL1 (231 aa).

It belongs to the universal ribosomal protein uL1 family. Part of the 50S ribosomal subunit.

Its function is as follows. Binds directly to 23S rRNA. The L1 stalk is quite mobile in the ribosome, and is involved in E site tRNA release. Protein L1 is also a translational repressor protein, it controls the translation of the L11 operon by binding to its mRNA. This chain is Large ribosomal subunit protein uL1, found in Caldanaerobacter subterraneus subsp. tengcongensis (strain DSM 15242 / JCM 11007 / NBRC 100824 / MB4) (Thermoanaerobacter tengcongensis).